The chain runs to 163 residues: Nucleotide-binding protein ESA_02876 (163 aa).

It belongs to the YajQ family.

Nucleotide-binding protein. The protein is Nucleotide-binding protein ESA_02876 of Cronobacter sakazakii (strain ATCC BAA-894) (Enterobacter sakazakii).